A 501-amino-acid polypeptide reads, in one-letter code: NAD(P)H-quinone oxidoreductase subunit 2, chloroplastic (501 aa).

The next 14 helical transmembrane spans lie at 15–35 (ILPE…DLIL), 42–62 (VFFF…IFQL), 82–102 (IFRI…IDFI), 107–127 (LAIT…MFLC), 132–152 (LITI…LSGY), 167–187 (LLIG…LYGL), 210–230 (FGSL…LSLV), 244–264 (PTPV…ALLV), 278–298 (WHSL…LVAI), 307–327 (LAYS…TGNF), 334–354 (IVYL…IILF), 378–398 (FSLA…GFFG), 410–430 (GLYF…YYYL), and 466–486 (VSII…NPII).

This sequence belongs to the complex I subunit 2 family. In terms of assembly, NDH is composed of at least 16 different subunits, 5 of which are encoded in the nucleus.

It localises to the plastid. The protein resides in the chloroplast thylakoid membrane. The catalysed reaction is a plastoquinone + NADH + (n+1) H(+)(in) = a plastoquinol + NAD(+) + n H(+)(out). It catalyses the reaction a plastoquinone + NADPH + (n+1) H(+)(in) = a plastoquinol + NADP(+) + n H(+)(out). Its function is as follows. NDH shuttles electrons from NAD(P)H:plastoquinone, via FMN and iron-sulfur (Fe-S) centers, to quinones in the photosynthetic chain and possibly in a chloroplast respiratory chain. The immediate electron acceptor for the enzyme in this species is believed to be plastoquinone. Couples the redox reaction to proton translocation, and thus conserves the redox energy in a proton gradient. This Physcomitrium patens (Spreading-leaved earth moss) protein is NAD(P)H-quinone oxidoreductase subunit 2, chloroplastic.